The chain runs to 528 residues: G protein-coupled receptor 161 (528 aa).

Topologically, residues 1–30 (MSLNSSLGHRKELSNLTEGASDQGGSGVTE) are extracellular. N-linked (GlcNAc...) asparagine glycans are attached at residues Asn-4 and Asn-15. A helical transmembrane segment spans residues 31–51 (FVAIVIITVFVCLGNLVIVIT). Topologically, residues 52–64 (LYRKSYLLTLSNK) are cytoplasmic. Residues 65-85 (FVFSLTLSNFLLSVLVLPFVV) form a helical membrane-spanning segment. Over 86–101 (TSSIRREWIFGVVWCN) the chain is Extracellular. A disulfide bridge links Cys-100 with Cys-178. The N-linked (GlcNAc...) asparagine glycan is linked to Asn-101. Residues 102-122 (FSALLYLLISSASMLTLGIIA) form a helical membrane-spanning segment. Residues 123–143 (VDRYYAVLYPMAYPMKITGNR) are Cytoplasmic-facing. Residues 144–164 (AVMVLAYIWLHSLIGCLPPLF) form a helical membrane-spanning segment. The Extracellular segment spans residues 165–190 (GWSSVEFDEFKWMCVAAWHREPGYTA). The helical transmembrane segment at 191–211 (FWQIWCALLPFLVMLVCYGFI) threads the bilayer. Residues 212 to 269 (FRVARVKARKVHCGAVVTVEVGVQRTGRKNSSTSTSSSGSRKSAFQGVVYSANQCKAL) are Cytoplasmic-facing. A helical membrane pass occupies residues 270-290 (VTILVVIGAFMVTWGPYMVVI). Topologically, residues 291-306 (TSEALWGKNCVSPTLE) are extracellular. A helical membrane pass occupies residues 307–327 (TWATWLSFTSAICHPLIYGLW). Topologically, residues 328–528 (NKTVRKELLG…EGDVLATEQR (201 aa)) are cytoplasmic.

This sequence belongs to the G-protein coupled receptor 1 family.

It localises to the cell projection. The protein resides in the cilium membrane. It is found in the cell membrane. Its function is as follows. Key negative regulator of Shh signaling, which promotes the processing of GLI3 into GLI3R during neural tube development. Recruited by TULP3 and the IFT-A complex to primary cilia and acts as a regulator of the PKA-dependent basal repression machinery in Shh signaling by increasing cAMP levels, leading to promote the PKA-dependent processing of GLI3 into GLI3R and repress the Shh signaling. In presence of SHH, it is removed from primary cilia and is internalized into recycling endosomes, preventing its activity and allowing activation of the Shh signaling. Its ligand is unknown. The protein is G protein-coupled receptor 161 (GPR161) of Bos taurus (Bovine).